We begin with the raw amino-acid sequence, 156 residues long: Ribosomal RNA large subunit methyltransferase H (156 aa).

Residues L73, G104, and 123 to 128 (LSALTL) each bind S-adenosyl-L-methionine.

The protein belongs to the RNA methyltransferase RlmH family. Homodimer.

The protein resides in the cytoplasm. The enzyme catalyses pseudouridine(1915) in 23S rRNA + S-adenosyl-L-methionine = N(3)-methylpseudouridine(1915) in 23S rRNA + S-adenosyl-L-homocysteine + H(+). Functionally, specifically methylates the pseudouridine at position 1915 (m3Psi1915) in 23S rRNA. In Vibrio parahaemolyticus serotype O3:K6 (strain RIMD 2210633), this protein is Ribosomal RNA large subunit methyltransferase H.